We begin with the raw amino-acid sequence, 503 residues long: uncharacterized protein (503 aa).

Transmembrane regions (helical) follow at residues 20-40 (FIAF…VLTM), 43-63 (LGPF…GVML), 106-126 (VSLT…LSFA), 138-158 (LIGL…ISLF), 166-186 (AILF…ILGI), 215-235 (VIST…LTAI), 249-269 (LLMF…ISGI), 301-321 (YLGI…SLAS), 359-379 (VWAS…VPFL), 405-425 (LAVL…FMIL), 443-463 (GVSF…ITAW), and 468-488 (TFKL…FIHS).

To M.genitalium MG225.

It is found in the cell membrane. This is an uncharacterized protein from Mycoplasma pneumoniae (strain ATCC 29342 / M129 / Subtype 1) (Mycoplasmoides pneumoniae).